A 428-amino-acid chain; its full sequence is AP-1 complex subunit mu-1 (428 aa).

In terms of domain architecture, MHD spans 170 to 426 (KNEVFLDVIE…ITMAGEYELR (257 aa)).

The protein belongs to the adaptor complexes medium subunit family. As to quaternary structure, adaptor protein complex 1 (AP-1) is a heterotetramer composed of two large adaptins (gamma-type subunit and beta-type subunit), a medium adaptin (mu-type subunit) and a small adaptin (sigma-type subunit).

The protein resides in the golgi apparatus. Its subcellular location is the cytoplasmic vesicle. The protein localises to the clathrin-coated vesicle membrane. Its function is as follows. Subunit of clathrin-associated adaptor protein complex 1 that plays a role in protein sorting at the trans-Golgi network and early endosomes (TGN/EE). The AP complexes mediate the recruitment of clathrin to membranes and the recognition of sorting signals within the cytosolic tails of transmembrane cargo molecules. Functions redundantly with AP1M2 in multiple post-Golgi trafficking pathways leading from the TGN to the vacuole, the plasma membrane, and the cell-division plane. The protein is AP-1 complex subunit mu-1 (AP1M1) of Arabidopsis thaliana (Mouse-ear cress).